The sequence spans 75 residues: Putative antitoxin PH1062.1 (75 aa).

This sequence belongs to the UPF0330 family.

Its function is as follows. Possibly the antitoxin component of a type II toxin-antitoxin (TA) system. The sequence is that of Putative antitoxin PH1062.1 from Pyrococcus horikoshii (strain ATCC 700860 / DSM 12428 / JCM 9974 / NBRC 100139 / OT-3).